Here is a 417-residue protein sequence, read N- to C-terminus: Tyrosine--tRNA ligase (417 aa).

Residue Tyr34 coordinates L-tyrosine. Residues 39 to 48 carry the 'HIGH' region motif; the sequence is PTAKSIHIGN. 2 residues coordinate L-tyrosine: Tyr165 and Gln169. A 'KMSKS' region motif is present at residues 227–231; it reads KFGKS. ATP is bound at residue Lys230. An S4 RNA-binding domain is found at 349 to 416; that stretch reads TDVVELLVKD…GKKKYFLAKV (68 aa).

This sequence belongs to the class-I aminoacyl-tRNA synthetase family. TyrS type 1 subfamily. As to quaternary structure, homodimer.

It is found in the cytoplasm. It carries out the reaction tRNA(Tyr) + L-tyrosine + ATP = L-tyrosyl-tRNA(Tyr) + AMP + diphosphate + H(+). Functionally, catalyzes the attachment of tyrosine to tRNA(Tyr) in a two-step reaction: tyrosine is first activated by ATP to form Tyr-AMP and then transferred to the acceptor end of tRNA(Tyr). This is Tyrosine--tRNA ligase from Oenococcus oeni (strain ATCC BAA-331 / PSU-1).